The following is a 244-amino-acid chain: Probable H/ACA ribonucleoprotein complex subunit 1-like protein (244 aa).

2 disordered regions span residues 1-53 (MSFR…GGYD) and 145-244 (FLPQ…TKFE). 2 RGG-box regions span residues 4–51 (RGGR…GRGG) and 153–222 (RGRG…RGRG). Positions 160-173 (RGGDRGGRGSDRGG) are enriched in basic and acidic residues. Gly residues-rich tracts occupy residues 174-201 (RGGF…GGFR) and 208-217 (FRGGRGGDFG). Residues 218–228 (GRGRGDFKRSY) show a composition bias toward basic and acidic residues.

It belongs to the GAR1 family. As to quaternary structure, component of the small nucleolar ribonucleoprotein particle containing H/ACA-type snoRNAs (H/ACA snoRNPs).

Its subcellular location is the nucleus. It localises to the nucleolus. Required for ribosome biogenesis. Part of a complex which catalyzes pseudouridylation of rRNA. This involves the isomerization of uridine such that the ribose is subsequently attached to C5, instead of the normal N1. Pseudouridine ('psi') residues may serve to stabilize the conformation of rRNAs. Involved in phase separation into sub-nucleolar condensates. Essential for normal development and also plays a role in fertility. The chain is Probable H/ACA ribonucleoprotein complex subunit 1-like protein from Caenorhabditis elegans.